A 383-amino-acid polypeptide reads, in one-letter code: Fructose-1,6-bisphosphate aldolase/phosphatase (383 aa).

Asp-11 serves as the catalytic Proton acceptor; for FBP phosphatase activity. Residues Asp-11, His-18, Asp-52, and Asp-53 each coordinate Mg(2+). His-18 serves as a coordination point for beta-D-fructose 1,6-bisphosphate. Residue His-18 participates in dihydroxyacetone phosphate binding. A beta-D-fructose 1,6-bisphosphate-binding site is contributed by Tyr-90. Gln-94 serves as a coordination point for Mg(2+). 103 to 104 (GN) serves as a coordination point for beta-D-fructose 1,6-bisphosphate. Residue Asp-131 coordinates Mg(2+). Position 132 (Lys-132) interacts with beta-D-fructose 1,6-bisphosphate. Lys-132 contacts dihydroxyacetone phosphate. The Proton donor/acceptor; for FBP aldolase activity role is filled by Tyr-228. Mg(2+) contacts are provided by Lys-231, Asp-232, and Asp-233. Lys-231 functions as the Schiff-base intermediate with DHAP; for FBP aldolase activity in the catalytic mechanism. Beta-D-fructose 1,6-bisphosphate-binding positions include 241 to 242 (QH), Arg-265, Asp-286, and Tyr-347. The dihydroxyacetone phosphate site is built by Arg-265 and Asp-286. The disordered stretch occupies residues 361-383 (FKKEEDVKKAKPSVYTSKDQGMD). Residues 374 to 383 (VYTSKDQGMD) show a composition bias toward polar residues.

This sequence belongs to the FBP aldolase/phosphatase family. In terms of assembly, homooctamer; dimer of tetramers. Requires Mg(2+) as cofactor.

The enzyme catalyses beta-D-fructose 1,6-bisphosphate + H2O = beta-D-fructose 6-phosphate + phosphate. The catalysed reaction is beta-D-fructose 1,6-bisphosphate = D-glyceraldehyde 3-phosphate + dihydroxyacetone phosphate. Its pathway is carbohydrate biosynthesis; gluconeogenesis. Catalyzes two subsequent steps in gluconeogenesis: the aldol condensation of dihydroxyacetone phosphate (DHAP) and glyceraldehyde-3-phosphate (GA3P) to fructose-1,6-bisphosphate (FBP), and the dephosphorylation of FBP to fructose-6-phosphate (F6P). In Metallosphaera sedula (strain ATCC 51363 / DSM 5348 / JCM 9185 / NBRC 15509 / TH2), this protein is Fructose-1,6-bisphosphate aldolase/phosphatase.